The chain runs to 269 residues: tRNA pseudouridine synthase A (269 aa).

Catalysis depends on aspartate 55, which acts as the Nucleophile. Tyrosine 111 is a binding site for substrate.

The protein belongs to the tRNA pseudouridine synthase TruA family.

It catalyses the reaction uridine(38/39/40) in tRNA = pseudouridine(38/39/40) in tRNA. Functionally, formation of pseudouridine at positions 38, 39 and 40 in the anticodon stem and loop of transfer RNAs. The chain is tRNA pseudouridine synthase A from Methanosarcina barkeri (strain Fusaro / DSM 804).